A 285-amino-acid polypeptide reads, in one-letter code: Secreted LysM effector slp2 (285 aa).

The N-terminal stretch at 1-16 is a signal peptide; sequence MLPITVVTLFAALAAA. The interval 75–143 is disordered; the sequence is GDAAKAGDAA…KGGDAAKGGN (69 aa). Positions 85-116 are enriched in basic and acidic residues; it reads KGGDAKGGDAKGGDAKGGDAKGGKGGDAKGGK. The segment covering 117–139 has biased composition (gly residues); it reads GGDAAKGGKGGDAAKGGKGGDAA. LysM domains lie at 157 to 201 and 237 to 281; these read VEHK…VLKI and FTRV…TINL.

It belongs to the secreted LysM effector family.

Functionally, might have a role in sequestration of chitin oligosaccharides (breakdown products of fungal cell walls that are released during invasion and act as triggers of host immunity) to dampen host defense. This Pyricularia oryzae (strain 70-15 / ATCC MYA-4617 / FGSC 8958) (Rice blast fungus) protein is Secreted LysM effector slp2.